Reading from the N-terminus, the 437-residue chain is Methionine aminopeptidase 2 (437 aa).

The tract at residues 1 to 90 (MAAQAAPAEE…LFPNNQYPKG (90 aa)) is disordered. Residues 10–20 (ELSKLSVDETK) are compositionally biased toward basic and acidic residues. Residues 31–42 (SDAESGDEEAEE) show a composition bias toward acidic residues. Basic residues predominate over residues 52–66 (AKKKKKRKPKKKKKA). Histidine 190 lines the substrate pocket. 3 residues coordinate a divalent metal cation: aspartate 210, aspartate 221, and histidine 290. A substrate-binding site is contributed by histidine 298. Positions 323 and 418 each coordinate a divalent metal cation.

Belongs to the peptidase M24A family. Methionine aminopeptidase eukaryotic type 2 subfamily. Requires Co(2+) as cofactor. Zn(2+) is required as a cofactor. It depends on Mn(2+) as a cofactor. Fe(2+) serves as cofactor.

It is found in the cytoplasm. The catalysed reaction is Release of N-terminal amino acids, preferentially methionine, from peptides and arylamides.. Cotranslationally removes the N-terminal methionine from nascent proteins. The N-terminal methionine is often cleaved when the second residue in the primary sequence is small and uncharged (Met-Ala-, Cys, Gly, Pro, Ser, Thr, or Val). The chain is Methionine aminopeptidase 2 from Neurospora crassa (strain ATCC 24698 / 74-OR23-1A / CBS 708.71 / DSM 1257 / FGSC 987).